A 244-amino-acid chain; its full sequence is Ras-like protein family member 11B (244 aa).

A small GTPase-like region spans residues Pro-19–Thr-242. GTP contacts are provided by residues Gly-30–Thr-37, Asp-77–Val-81, and Asn-142–Asp-145. Residues Ile-200–Asn-222 form a disordered region.

Belongs to the small GTPase superfamily. Ras family.

It carries out the reaction GTP + H2O = GDP + phosphate + H(+). In Danio rerio (Zebrafish), this protein is Ras-like protein family member 11B.